The primary structure comprises 386 residues: Histidinol-phosphate aminotransferase (386 aa).

The span at 1–11 shows a compositional bias: polar residues; it reads MMVRKSTASNR. Residues 1–22 are disordered; that stretch reads MMVRKSTASNRRLQDKGDEEPV. The residue at position 248 (Lys-248) is an N6-(pyridoxal phosphate)lysine.

The protein belongs to the class-II pyridoxal-phosphate-dependent aminotransferase family. Histidinol-phosphate aminotransferase subfamily. As to quaternary structure, homodimer. Pyridoxal 5'-phosphate serves as cofactor.

The enzyme catalyses L-histidinol phosphate + 2-oxoglutarate = 3-(imidazol-4-yl)-2-oxopropyl phosphate + L-glutamate. It functions in the pathway amino-acid biosynthesis; L-histidine biosynthesis; L-histidine from 5-phospho-alpha-D-ribose 1-diphosphate: step 7/9. In Moorella thermoacetica (strain ATCC 39073 / JCM 9320), this protein is Histidinol-phosphate aminotransferase.